A 247-amino-acid polypeptide reads, in one-letter code: MAQDDEDVGLALGLSLGSGGHRRQRESRDEAPSSAAASLLTLRLPAESGGQPQVVVKREVVRAEEEEYEYEYERALYSSSAAAADDDEGCNSRKKLRLSKEQSALLEDRFKEHSTLNPKQKVALAKQLNLRPRQVEVWFQNRRARTKLKQTEVDCELLKRCCETLTEENRRLHRELQQLRALTHSTAAGFFMATTLPVPAATLSICPSCERLATAAAAGASPTAAADRTNKPTAPHLFSPFAKSAAC.

Residues Met-1–Leu-44 form a disordered region. Low complexity predominate over residues Pro-32–Leu-44. Residues Asn-91–Gln-150 constitute a DNA-binding region (homeobox). The segment at Lys-149 to Ala-193 is leucine-zipper. The tract at residues Ser-221–Cys-247 is disordered.

It belongs to the HD-ZIP homeobox family. Class II subfamily. In terms of tissue distribution, expressed in seedlings, stems, leaf blades and panicles.

The protein resides in the nucleus. Its function is as follows. Probable transcription factor. In Oryza sativa subsp. japonica (Rice), this protein is Homeobox-leucine zipper protein HOX15 (HOX15).